A 134-amino-acid chain; its full sequence is Aspartate 1-decarboxylase (134 aa).

Ser-25 functions as the Schiff-base intermediate with substrate; via pyruvic acid in the catalytic mechanism. Ser-25 is subject to Pyruvic acid (Ser). Thr-57 lines the substrate pocket. Catalysis depends on Tyr-58, which acts as the Proton donor. 73-75 (GAA) serves as a coordination point for substrate.

This sequence belongs to the PanD family. As to quaternary structure, heterooctamer of four alpha and four beta subunits. Pyruvate serves as cofactor. Post-translationally, is synthesized initially as an inactive proenzyme, which is activated by self-cleavage at a specific serine bond to produce a beta-subunit with a hydroxyl group at its C-terminus and an alpha-subunit with a pyruvoyl group at its N-terminus.

It localises to the cytoplasm. It catalyses the reaction L-aspartate + H(+) = beta-alanine + CO2. It functions in the pathway cofactor biosynthesis; (R)-pantothenate biosynthesis; beta-alanine from L-aspartate: step 1/1. Its function is as follows. Catalyzes the pyruvoyl-dependent decarboxylation of aspartate to produce beta-alanine. In Citrifermentans bemidjiense (strain ATCC BAA-1014 / DSM 16622 / JCM 12645 / Bem) (Geobacter bemidjiensis), this protein is Aspartate 1-decarboxylase.